We begin with the raw amino-acid sequence, 190 residues long: Adenine phosphoribosyltransferase (190 aa).

The protein belongs to the purine/pyrimidine phosphoribosyltransferase family. In terms of assembly, homodimer.

The protein resides in the cytoplasm. It catalyses the reaction AMP + diphosphate = 5-phospho-alpha-D-ribose 1-diphosphate + adenine. The protein operates within purine metabolism; AMP biosynthesis via salvage pathway; AMP from adenine: step 1/1. Its function is as follows. Catalyzes a salvage reaction resulting in the formation of AMP, that is energically less costly than de novo synthesis. The chain is Adenine phosphoribosyltransferase from Cupriavidus metallidurans (strain ATCC 43123 / DSM 2839 / NBRC 102507 / CH34) (Ralstonia metallidurans).